A 388-amino-acid polypeptide reads, in one-letter code: Sex-determination protein fem-3 (388 aa).

6 repeat units span residues 7–10 (SDDV), 110–113 (ITRF), 141–144 (ITRF), 234–237 (YHTT), 284–287 (YHTT), and 371–374 (SDDV).

Component of a complex containing fem-1, fem-2 and fem-3. Interacts with fem-1 and fem-2 (via N-terminus). Part of a E3 ubiquitin-protein ligase complex, at least composed of cul-2, elc-1, tra-1, fem-1, fem-2 and fem-3; mediates the ubiquitination and subsequent proteasomal degradation of tra-1. Interacts with tra-1. Interacts with sel-10. Interacts with tra-2.

In terms of biological role, required for male development. In XO (male) animals, fem-3 directs male differentiation in all tissues. In XX (hermaphrodite) animals, it specifies the first 80 or so germ cells to be sperm. Negatively regulates male development when bound to tra-2. Together with fem-2 associates with the CBC(fem-1) E3 ubiquitin-protein ligase complex which mediates the ubiquitination and subsequent proteasomal degradation of tra-1. In Caenorhabditis elegans, this protein is Sex-determination protein fem-3 (fem-3).